We begin with the raw amino-acid sequence, 484 residues long: MGSGLNDTLSRNYNGLELWEIIVIVLSAIFVVVLAISLWLTFRRKTSRSSSNLIPVSRQIPPSVPEEIKEIRVDEVSSSNGGNGYPSISEKFGDKEPEKGIKAESENGDSSRSGSFNHLEKKDGSSVSSANPLTAPSPLSGLPEFSHLGWGHWFTLRDLQMATNQFSRDNIIGDGGYGVVYRGNLVNGTPVAVKKLLNNLGQADKDFRVEVEAIGHVRHKNLVRLLGYCMEGTQRMLVYEYVNNGNLEQWLRGDNQNHEYLTWEARVKILIGTAKALAYLHEAIEPKVVHRDIKSSNILIDDKFNSKISDFGLAKLLGADKSFITTRVMGTFGYVAPEYANSGLLNEKSDVYSFGVVLLEAITGRYPVDYARPPPEVHLVEWLKMMVQQRRSEEVVDPNLETKPSTSALKRTLLTALRCVDPMSEKRPRMSQVARMLESEEYPIAREDRRRRRSQNGTTRDSDPPRNSTDTDKSEYHDLKPEGG.

The helical transmembrane segment at 21 to 41 (IIVIVLSAIFVVVLAISLWLT) threads the bilayer. A disordered region spans residues 72–135 (RVDEVSSSNG…SVSSANPLTA (64 aa)). Over residues 91–105 (KFGDKEPEKGIKAES) the composition is skewed to basic and acidic residues. A compositionally biased stretch (polar residues) spans 125–134 (SSVSSANPLT). Threonine 155 carries the phosphothreonine modification. The 280-residue stretch at 166 to 445 (FSRDNIIGDG…MLESEEYPIA (280 aa)) folds into the Protein kinase domain. ATP contacts are provided by residues 172-180 (IGDGGYGVV) and lysine 194. Tyrosine 239 is subject to Phosphotyrosine. Aspartate 292 acts as the Proton acceptor in catalysis. At serine 296 the chain carries Phosphoserine. Threonine 326 and threonine 331 each carry phosphothreonine. A Phosphotyrosine modification is found at tyrosine 339. Residues 425 to 484 (EKRPRMSQVARMLESEEYPIAREDRRRRRSQNGTTRDSDPPRNSTDTDKSEYHDLKPEGG) are disordered. Residues 460–484 (RDSDPPRNSTDTDKSEYHDLKPEGG) show a composition bias toward basic and acidic residues.

The protein belongs to the protein kinase superfamily. Ser/Thr protein kinase family.

It localises to the cell membrane. The enzyme catalyses L-seryl-[protein] + ATP = O-phospho-L-seryl-[protein] + ADP + H(+). It carries out the reaction L-threonyl-[protein] + ATP = O-phospho-L-threonyl-[protein] + ADP + H(+). In Arabidopsis thaliana (Mouse-ear cress), this protein is Probable receptor-like protein kinase At5g18500.